The sequence spans 155 residues: Short-chain-enoyl-CoA hydratase (155 aa).

This sequence belongs to the enoyl-CoA hydratase/isomerase family.

The catalysed reaction is a short-chain (3S)-3-hydroxyacyl-CoA = a short-chain (2E)-enoyl-CoA + H2O. It participates in lipid metabolism; butanoate metabolism. The chain is Short-chain-enoyl-CoA hydratase (crt) from Clostridioides difficile (Peptoclostridium difficile).